We begin with the raw amino-acid sequence, 227 residues long: Orotidine 5'-phosphate decarboxylase (227 aa).

Substrate-binding positions include D8, K30, 59–68 (DLKLYDIPNT), T118, R178, Q187, G207, and R208. Catalysis depends on K61, which acts as the Proton donor.

This sequence belongs to the OMP decarboxylase family. Type 1 subfamily. Homodimer.

It catalyses the reaction orotidine 5'-phosphate + H(+) = UMP + CO2. Its pathway is pyrimidine metabolism; UMP biosynthesis via de novo pathway; UMP from orotate: step 2/2. Functionally, catalyzes the decarboxylation of orotidine 5'-monophosphate (OMP) to uridine 5'-monophosphate (UMP). This Nitratiruptor sp. (strain SB155-2) protein is Orotidine 5'-phosphate decarboxylase.